The following is a 278-amino-acid chain: Diaminopimelate epimerase (278 aa).

The substrate site is built by N11 and N75. The active-site Proton donor is the C84. Residues 85 to 86, N160, N195, and 213 to 214 contribute to the substrate site; these read GN and ER. C222 (proton acceptor) is an active-site residue. 223-224 lines the substrate pocket; the sequence is GT.

Belongs to the diaminopimelate epimerase family. Homodimer.

The protein resides in the cytoplasm. It carries out the reaction (2S,6S)-2,6-diaminopimelate = meso-2,6-diaminopimelate. It participates in amino-acid biosynthesis; L-lysine biosynthesis via DAP pathway; DL-2,6-diaminopimelate from LL-2,6-diaminopimelate: step 1/1. Functionally, catalyzes the stereoinversion of LL-2,6-diaminopimelate (L,L-DAP) to meso-diaminopimelate (meso-DAP), a precursor of L-lysine and an essential component of the bacterial peptidoglycan. In Corynebacterium aurimucosum (strain ATCC 700975 / DSM 44827 / CIP 107346 / CN-1) (Corynebacterium nigricans), this protein is Diaminopimelate epimerase.